Consider the following 142-residue polypeptide: Small ribosomal subunit protein bS6 (142 aa).

Residues 110–133 (NKKPSHAKEKHEKTEHTHSHHTEE) are compositionally biased toward basic and acidic residues. Positions 110-142 (NKKPSHAKEKHEKTEHTHSHHTEETESVGSHSK) are disordered.

This sequence belongs to the bacterial ribosomal protein bS6 family.

Its function is as follows. Binds together with bS18 to 16S ribosomal RNA. This chain is Small ribosomal subunit protein bS6, found in Helicobacter pylori (strain Shi470).